We begin with the raw amino-acid sequence, 276 residues long: Phosphate import ATP-binding protein PstB (276 aa).

The ABC transporter domain maps to 23–271 (VNNKNIVYDT…PSDQRTEDYI (249 aa)). Position 62–69 (62–69 (GPSGCGKS)) interacts with ATP.

This sequence belongs to the ABC transporter superfamily. Phosphate importer (TC 3.A.1.7) family. In terms of assembly, the complex is composed of two ATP-binding proteins (PstB), two transmembrane proteins (PstC and PstA) and a solute-binding protein (PstS).

It is found in the cell membrane. The enzyme catalyses phosphate(out) + ATP + H2O = ADP + 2 phosphate(in) + H(+). Its function is as follows. Part of the ABC transporter complex PstSACB involved in phosphate import. Responsible for energy coupling to the transport system. The chain is Phosphate import ATP-binding protein PstB from Oceanobacillus iheyensis (strain DSM 14371 / CIP 107618 / JCM 11309 / KCTC 3954 / HTE831).